A 119-amino-acid polypeptide reads, in one-letter code: Large ribosomal subunit protein bL20 (119 aa).

The protein belongs to the bacterial ribosomal protein bL20 family.

Its function is as follows. Binds directly to 23S ribosomal RNA and is necessary for the in vitro assembly process of the 50S ribosomal subunit. It is not involved in the protein synthesizing functions of that subunit. The chain is Large ribosomal subunit protein bL20 from Laribacter hongkongensis (strain HLHK9).